The chain runs to 186 residues: Signal peptidase I P (186 aa).

At 1–15 the chain is on the cytoplasmic side; sequence MTKEKVFKKKSSILE. Residues 16–35 form a helical membrane-spanning segment; sequence WGKAIVIAVILALLIRNFLF. At 36–186 the chain is on the extracellular side; the sequence is EPYVVEGKSM…FPFSNMRKAK (151 aa). Catalysis depends on residues S44 and K86.

Belongs to the peptidase S26 family.

Its subcellular location is the cell membrane. The enzyme catalyses Cleavage of hydrophobic, N-terminal signal or leader sequences from secreted and periplasmic proteins.. The chain is Signal peptidase I P (sipP) from Bacillus subtilis subsp. natto.